The sequence spans 711 residues: Amyloid beta precursor protein binding family B member 1 (711 aa).

Serine 135 carries the post-translational modification Phosphoserine. Disordered stretches follow at residues 140-257, 277-300, and 321-364; these read NTQG…SDLP, GTTQWEPPGRASPSQGNSPQEESQ, and EPSE…QRNA. A compositionally biased stretch (acidic residues) spans 156 to 174; sequence EVEEEDEDEEEEDEEEEDL. Lysine 205 is modified (N6-acetyllysine). Residues 224-235 show a composition bias toward polar residues; it reads SWATLSQGSPSY. The 33-residue stretch at 254–286 folds into the WW domain; sequence SDLPAGWMRVQDTSGTYYWHIPTGTTQWEPPGR. The segment covering 288–300 has biased composition (polar residues); the sequence is SPSQGNSPQEESQ. 2 PID domains span residues 365 to 533 and 538 to 700; these read NPGI…QVEF and NELV…LWGS. Residue serine 460 is modified to Phosphoserine; by PKC. Phosphoserine is present on serine 518. Tyrosine 548 is subject to Phosphotyrosine; by ABL1. The residue at position 611 (serine 611) is a Phosphoserine; by SGK1. Lysine 702 carries the post-translational modification N6-acetyllysine.

Component of a complex, at least composed of APBB1, RASD1/DEXRAS1 and APP. Interacts (via PID domain 2) with APP (with the intracellular domain of the amyloid-beta precursor protein). Interacts (via PID domain 2) with RASD1/DEXRAS1; impairs the transcription activation activity. Interacts (via PID domain 1) with KAT5/TIP60. Interacts (via the WW domain) with the proline-rich region of APBB1IP. Interacts with TSHZ1 and TSHZ2. Interacts (via the WW domain) with histone H2AX (when phosphorylated on 'Tyr-142') and the proline-rich region of ENAH. Interacts with MAPK8. Interacts (via PID domain 1) with TSHZ3 (via homeobox domain). Interacts with SET. Found in a trimeric complex with HDAC1 and TSHZ3; the interaction between HDAC1 and APBB1 is mediated by TSHZ3. Interacts (via WWW domain) with NEK6. Interacts (via WWW domain) with ABL1. Interacts with RNF157. Interacts with ARF6. Post-translationally, polyubiquitination by RNF157 leads to degradation by the proteasome. Phosphorylation at Ser-611 by SGK1 promotes its localization to the nucleus. Phosphorylated following nuclear translocation. Phosphorylation at Tyr-547 by ABL1 enhances transcriptional activation activity and reduces the affinity for RASD1/DEXRAS1. Phosphorylated at Ser-460 by PKC upon insulin activation. In terms of processing, acetylation at Lys-205 and Lys-702 by KAT5 promotes its transcription activator activity. As to expression, brain, not in liver, very low in other tissues. The long (neuron-specific) form is expressed only in brain.

Its subcellular location is the cell membrane. The protein localises to the cytoplasm. It localises to the nucleus. It is found in the cell projection. The protein resides in the growth cone. Its subcellular location is the nucleus speckle. Transcription coregulator that can have both coactivator and corepressor functions. Adapter protein that forms a transcriptionally active complex with the gamma-secretase-derived amyloid precursor protein (APP) intracellular domain. Plays a central role in the response to DNA damage by translocating to the nucleus and inducing apoptosis. May act by specifically recognizing and binding histone H2AX phosphorylated on 'Tyr-142' (H2AXY142ph) at double-strand breaks (DSBs), recruiting other pro-apoptosis factors such as MAPK8/JNK1. Required for histone H4 acetylation at double-strand breaks (DSBs). Its ability to specifically bind modified histones and chromatin modifying enzymes such as KAT5/TIP60, probably explains its transcription activation activity. Functions in association with TSHZ3, SET and HDAC factors as a transcriptional repressor, that inhibits the expression of CASP4. Associates with chromatin in a region surrounding the CASP4 transcriptional start site(s). Involved in hippocampal neurite branching and neuromuscular junction formation, as a result plays a role in spatial memory functioning. Plays a role in the maintenance of lens transparency. May play a role in muscle cell strength. Acts as a molecular adapter that functions in neurite outgrowth by activating the RAC1-ARF6 axis upon insulin treatment. The protein is Amyloid beta precursor protein binding family B member 1 of Rattus norvegicus (Rat).